We begin with the raw amino-acid sequence, 350 residues long: tRNA uridine(34) hydroxylase (350 aa).

Positions 146–240 (DDPDALFIDM…YARKAREQGL (95 aa)) constitute a Rhodanese domain. The active-site Cysteine persulfide intermediate is Cys-200.

The protein belongs to the TrhO family.

The enzyme catalyses uridine(34) in tRNA + AH2 + O2 = 5-hydroxyuridine(34) in tRNA + A + H2O. Its function is as follows. Catalyzes oxygen-dependent 5-hydroxyuridine (ho5U) modification at position 34 in tRNAs, the first step in 5-carboxymethoxyuridine (cmo5U) biosynthesis. May be part of an alternate pathway, which is able to bypass cmo5U biogenesis in a subset of tRNAs under aerobic conditions. This Escherichia coli (strain SMS-3-5 / SECEC) protein is tRNA uridine(34) hydroxylase.